The sequence spans 343 residues: Signaling lymphocytic activation molecule (343 aa).

The signal sequence occupies residues 1–24 (MDPKGSLSWRILLFLSLAFELSYG). The Extracellular segment spans residues 25-242 (TGGGVMDCPV…KQESSSESSP (218 aa)). One can recognise an Ig-like V-type domain in the interval 29 to 138 (VMDCPVILQK…VQQFCKQLKL (110 aa)). 9 N-linked (GlcNAc...) asparagine glycosylation sites follow: Asn-54, Asn-58, Asn-103, Asn-126, Asn-151, Asn-158, Asn-192, Asn-211, and Asn-226. One can recognise an Ig-like C2-type domain in the interval 145 to 228 (PEIKVLNKTQ…SSISRTFNLS (84 aa)). Intrachain disulfides connect Cys-161–Cys-232 and Cys-167–Cys-212. The chain crosses the membrane as a helical span at residues 243-265 (WMQYTLVPLGVVIIFILVFTAII). Over 266-343 (MMKRQGKSNH…VYASVTLPES (78 aa)) the chain is Cytoplasmic. An ITSM 1 motif is present at residues 286–291 (TIYAQV). Phosphotyrosine; by FYN is present on residues Tyr-288, Tyr-315, and Tyr-335. The short motif at 313-318 (TIYVAA) is the SH2-binding element. The interval 320 to 343 (EPAPESVQEPNPTTVYASVTLPES) is disordered. The segment covering 327–343 (QEPNPTTVYASVTLPES) has biased composition (polar residues). An ITSM 2 motif is present at residues 333-338 (TVYASV).

As to quaternary structure, interacts (via cytoplasmic domain) with SH2D1A and SH2D1B; SH2D1A mediates association with FYN; SH2D1A binds to phosphorylated and not phosphorylated ITSM 1. Interacts (via cytoplasmic domain phosphorylated on tyrosine residues) with INPP5D and PTPN11; presence of SH2D1A facilitates binding to INPP5D. Interacts with MAP4K1. Interacts with PIK3C3, BECN1 and UVRAG; indicative for an association with PI3K complex II (PI3KC3-C2). Phosphorylated on tyrosine residues by FYN.

It is found in the cell membrane. In terms of biological role, self-ligand receptor of the signaling lymphocytic activation molecule (SLAM) family. SLAM receptors triggered by homo- or heterotypic cell-cell interactions are modulating the activation and differentiation of a wide variety of immune cells and thus are involved in the regulation and interconnection of both innate and adaptive immune response. Activities are controlled by presence or absence of small cytoplasmic adapter proteins, SH2D1A/SAP and/or SH2D1B/EAT-2. SLAMF1-induced signal-transduction events in T-lymphocytes are different from those in B-cells. Two modes of SLAMF1 signaling seem to exist: one depending on SH2D1A (and perhaps SH2D1B) and another in which protein-tyrosine phosphatase 2C (PTPN11)-dependent signal transduction operates. Initially it has been proposed that association with SH2D1A prevents binding to inhibitory effectors including INPP5D/SHIP1 and PTPN11/SHP-2. However, signaling is also regulated by SH2D1A which can simultaneously interact with and recruit FYN which subsequently phosphorylates and activates SLAMF1. Mediates IL-2-independent proliferation of activated T-cells during immune responses and induces IFN-gamma production. Downstreaming signaling involves INPP5D, DOK1 and DOK2 leading to inhibited IFN-gamma production in T-cells, and PRKCQ, BCL10 and NFKB1 leading to increased T-cell activation and Th2 cytokine production. Promotes T-cell receptor-induced IL-4 secretion by CD4(+) cells. Inhibits antigen receptor-mediated production of IFN-gamma, but not IL-2, in CD4(-)/CD8(-) T-cells. Required for IL-4 production by germinal centers T follicular helper (T(Fh))cells. May inhibit CD40-induced signal transduction in monocyte-derived dendritic cells. May play a role in allergic responses and may regulate allergen-induced Th2 cytokine and Th1 cytokine secretion. In conjunction with SLAMF6 controls the transition between positive selection and the subsequent expansion and differentiation of the thymocytic natural killer T (NKT) cell lineage. Involved in the peripheral differentiation of indifferent natural killer T (iNKT) cells toward a regulatory NKT2 type. In macrophages involved in down-regulation of IL-12, TNF-alpha and nitric oxide in response to lipopolysaccharide (LPS). In B-cells activates the ERK signaling pathway independently of SH2D1A but implicating both, SYK and INPP5D, and activates Akt signaling dependent on SYK and SH2D1A. In conjunction with CD84/SLAMF5 and SLAMF6 may be a negative regulator of the humoral immune response. (Microbial infection) Involved in innate immune response against Gram-negative bacteria in macrophages; probably recognizes OmpC and/or OmpF on the bacterial surface, regulates phagosome maturation and recruitment of the PI3K complex II (PI3KC3-C2) leading to accumulated of PdtIns(3)P and NOX2 activity in the phagosomes. This is Signaling lymphocytic activation molecule (Slamf1) from Mus musculus (Mouse).